The primary structure comprises 220 residues: UPF0502 protein CV_4303 (220 aa).

Belongs to the UPF0502 family.

The polypeptide is UPF0502 protein CV_4303 (Chromobacterium violaceum (strain ATCC 12472 / DSM 30191 / JCM 1249 / CCUG 213 / NBRC 12614 / NCIMB 9131 / NCTC 9757 / MK)).